We begin with the raw amino-acid sequence, 138 residues long: rRNA methyltransferase 1, mitochondrial (138 aa).

The N-terminal 21 residues, 1 to 21, are a transit peptide targeting the mitochondrion; it reads MNNQPCSIVWRRFLTSKVKPA. Positions 92-113 are disordered; the sequence is KQDILSSKRQQEEHKSKYSRKS.

It belongs to the class IV-like SAM-binding methyltransferase superfamily. RNA methyltransferase TrmH family.

The protein resides in the mitochondrion. The enzyme catalyses a guanosine in 21S rRNA + S-adenosyl-L-methionine = a 2'-O-methylguanosine in 21S rRNA + S-adenosyl-L-homocysteine + H(+). In terms of biological role, S-adenosyl-L-methionine-dependent 2'-O-ribose methyltransferase that catalyzes the formation of the 2'-O-methylguanosine corresponding to position 2270 in S.cerevisiae 21S mitochondrial large ribosomal RNA, a universally conserved modification in the peptidyl transferase domain of the 21S rRNA. The polypeptide is rRNA methyltransferase 1, mitochondrial (Lachancea kluyveri (strain ATCC 58438 / CBS 3082 / BCRC 21498 / NBRC 1685 / JCM 7257 / NCYC 543 / NRRL Y-12651) (Yeast)).